A 327-amino-acid polypeptide reads, in one-letter code: uncharacterized protein (327 aa).

The helical transmembrane segment at 12-32 threads the bilayer; the sequence is LVVVVVAIAIFTLVLLMLWEG. Residues 149-170 are disordered; the sequence is AFSAVETSEGSDQESEGADEQG. Over residues 157-167 the composition is skewed to acidic residues; that stretch reads EGSDQESEGAD. Residues 162 to 227 adopt a coiled-coil conformation; that stretch reads ESEGADEQGK…LDEENREVAE (66 aa).

It localises to the membrane. This is an uncharacterized protein from Encephalitozoon cuniculi (strain GB-M1) (Microsporidian parasite).